Reading from the N-terminus, the 310-residue chain is Methionyl-tRNA formyltransferase (310 aa).

Residue S110 to P113 participates in (6S)-5,6,7,8-tetrahydrofolate binding.

The protein belongs to the Fmt family.

It carries out the reaction L-methionyl-tRNA(fMet) + (6R)-10-formyltetrahydrofolate = N-formyl-L-methionyl-tRNA(fMet) + (6S)-5,6,7,8-tetrahydrofolate + H(+). Attaches a formyl group to the free amino group of methionyl-tRNA(fMet). The formyl group appears to play a dual role in the initiator identity of N-formylmethionyl-tRNA by promoting its recognition by IF2 and preventing the misappropriation of this tRNA by the elongation apparatus. This is Methionyl-tRNA formyltransferase from Streptomyces griseus subsp. griseus (strain JCM 4626 / CBS 651.72 / NBRC 13350 / KCC S-0626 / ISP 5235).